Here is a 475-residue protein sequence, read N- to C-terminus: Dihydrolipoyl dehydrogenase (475 aa).

Residues 37–46 (EQYYSLGGVC), Lys55, and Ala118 contribute to the FAD site. A disulfide bridge links Cys46 with Cys51. Residues 183–187 (GGGII), Asp206, Val239, and 272–275 (AIGR) each bind NAD(+). FAD is bound by residues Asp315 and Ala323. The Proton acceptor role is filled by His447.

It belongs to the class-I pyridine nucleotide-disulfide oxidoreductase family. In terms of assembly, homodimer. FAD is required as a cofactor.

It localises to the cytoplasm. The catalysed reaction is N(6)-[(R)-dihydrolipoyl]-L-lysyl-[protein] + NAD(+) = N(6)-[(R)-lipoyl]-L-lysyl-[protein] + NADH + H(+). Its function is as follows. Lipoamide dehydrogenase is a component of the alpha-ketoacid dehydrogenase complexes. The polypeptide is Dihydrolipoyl dehydrogenase (lpdA) (Buchnera aphidicola subsp. Baizongia pistaciae (strain Bp)).